The primary structure comprises 160 residues: 2-C-methyl-D-erythritol 2,4-cyclodiphosphate synthase (160 aa).

A divalent metal cation contacts are provided by D11 and H13. 4-CDP-2-C-methyl-D-erythritol 2-phosphate-binding positions include 11-13 (DVH) and 37-38 (HS). A divalent metal cation is bound at residue H45. Residues 59–61 (DIG), 64–68 (FPDTD), 135–138 (TTTE), F142, and R145 contribute to the 4-CDP-2-C-methyl-D-erythritol 2-phosphate site.

The protein belongs to the IspF family. As to quaternary structure, homotrimer. Requires a divalent metal cation as cofactor.

The enzyme catalyses 4-CDP-2-C-methyl-D-erythritol 2-phosphate = 2-C-methyl-D-erythritol 2,4-cyclic diphosphate + CMP. It participates in isoprenoid biosynthesis; isopentenyl diphosphate biosynthesis via DXP pathway; isopentenyl diphosphate from 1-deoxy-D-xylulose 5-phosphate: step 4/6. Functionally, involved in the biosynthesis of isopentenyl diphosphate (IPP) and dimethylallyl diphosphate (DMAPP), two major building blocks of isoprenoid compounds. Catalyzes the conversion of 4-diphosphocytidyl-2-C-methyl-D-erythritol 2-phosphate (CDP-ME2P) to 2-C-methyl-D-erythritol 2,4-cyclodiphosphate (ME-CPP) with a corresponding release of cytidine 5-monophosphate (CMP). In Alcanivorax borkumensis (strain ATCC 700651 / DSM 11573 / NCIMB 13689 / SK2), this protein is 2-C-methyl-D-erythritol 2,4-cyclodiphosphate synthase.